The sequence spans 151 residues: MFRGANAISLDAKGRLAMPSRYRDELVSRSSGQLIVTIDAVDPCLCVYPLDEWELIETKLRALPSLREENRRLQRLLIGNAVDLELDGSGRFLVPPRLREYAKLDKRAMLVGQLNKFQLWDEDAWNAVSAADLAAIQQPGAMPDELRDLIL.

2 consecutive SpoVT-AbrB domains span residues 5 to 52 (ANAI…PLDE) and 81 to 124 (AVDL…DEDA).

The protein belongs to the MraZ family. As to quaternary structure, forms oligomers.

Its subcellular location is the cytoplasm. It is found in the nucleoid. This is Transcriptional regulator MraZ from Pseudomonas fluorescens (strain ATCC BAA-477 / NRRL B-23932 / Pf-5).